We begin with the raw amino-acid sequence, 503 residues long: Lycopene beta cyclase, chloroplastic/chromoplastic (503 aa).

Residues 1-85 constitute a chloroplast and chromoplast transit peptide; it reads MDTLLRTHNR…DLPLYDPSKA (85 aa). 90-117 provides a ligand contact to NAD(+); it reads LAVVGGGPLARSCSTSLGGGLSVVSIDP.

This sequence belongs to the lycopene cyclase family.

It localises to the plastid. The protein resides in the chloroplast. It is found in the chromoplast. The protein localises to the chromoplast membrane. Its subcellular location is the chloroplast membrane. It carries out the reaction a carotenoid psi-end group = a carotenoid beta-end derivative. The protein operates within carotenoid biosynthesis; beta-carotene biosynthesis. It participates in carotenoid biosynthesis; beta-zeacarotene biosynthesis. Its function is as follows. Catalyzes the double cyclization reaction which converts lycopene to beta-carotene and neurosporene to beta-zeacarotene. The chain is Lycopene beta cyclase, chloroplastic/chromoplastic (LCY1) from Narcissus pseudonarcissus (Daffodil).